A 508-amino-acid chain; its full sequence is Aspartyl/glutamyl-tRNA(Asn/Gln) amidotransferase subunit B (508 aa).

Belongs to the GatB/GatE family. GatB subfamily. Heterotrimer of A, B and C subunits.

The enzyme catalyses L-glutamyl-tRNA(Gln) + L-glutamine + ATP + H2O = L-glutaminyl-tRNA(Gln) + L-glutamate + ADP + phosphate + H(+). It catalyses the reaction L-aspartyl-tRNA(Asn) + L-glutamine + ATP + H2O = L-asparaginyl-tRNA(Asn) + L-glutamate + ADP + phosphate + 2 H(+). Allows the formation of correctly charged Asn-tRNA(Asn) or Gln-tRNA(Gln) through the transamidation of misacylated Asp-tRNA(Asn) or Glu-tRNA(Gln) in organisms which lack either or both of asparaginyl-tRNA or glutaminyl-tRNA synthetases. The reaction takes place in the presence of glutamine and ATP through an activated phospho-Asp-tRNA(Asn) or phospho-Glu-tRNA(Gln). The chain is Aspartyl/glutamyl-tRNA(Asn/Gln) amidotransferase subunit B from Salinibacter ruber (strain DSM 13855 / M31).